Here is a 503-residue protein sequence, read N- to C-terminus: MDLIPSFSLETWVLLALSLVLLYQYATYSHGFFKKLGIPGPKPLPLFGNVLSYRKGIWNFDIECHKKYGNMWGLYDGPRPVLSITEPDMIKAVLVKECYSVFTNRRSIFPAGFMKKALSISKDEEWKRIRTQLSQNFTSGKLKEMFPIIKQYGDVLVKNLRQEAEKGKPVQLKEIFGAYSMDIIIATAFGVNVDSLNNPHDPFVSKASKLFRFDFLSPFLLSVVIFPFLTQLYEMLNISIFPRDSLNFFTKFVKRTKENHLESNEKQRVNFLQMMLKSQNFKDTESHKALSDVEILAQSIFFIVAGYETTSSTLCFIMYSLATHPDVQKKLQQEIDKTLPNKAFPTYDVMMEMEYLDMVVNETLRLYPVTNRIERMSKKDFEINGMSFPKGTGVMIPSFALHRDSKYWPEPDEFRPERFSKKNKENIDPYIYMPFGNGPRNCIGMRMALMNLKLALIRLLQNFSFYTCKETQIPLRLGSQVILQPAKPIILKVVSRDETIRGA.

Cys442 is a heme binding site.

Belongs to the cytochrome P450 family. Heme is required as a cofactor.

The protein localises to the endoplasmic reticulum membrane. It localises to the microsome membrane. It carries out the reaction an organic molecule + reduced [NADPH--hemoprotein reductase] + O2 = an alcohol + oxidized [NADPH--hemoprotein reductase] + H2O + H(+). Cytochromes P450 are a group of heme-thiolate monooxygenases. In liver microsomes, this enzyme is involved in an NADPH-dependent electron transport pathway. It oxidizes a variety of structurally unrelated compounds, including steroids, fatty acids, and xenobiotics. This chain is Cytochrome P450 3A17 (CYP3A17), found in Cavia porcellus (Guinea pig).